The chain runs to 345 residues: Anthranilate phosphoribosyltransferase (345 aa).

Residues Gly-84, 87 to 88 (GD), Thr-92, 94 to 97 (NIST), 112 to 120 (KHGGRSVSS), and Ser-124 each bind 5-phospho-alpha-D-ribose 1-diphosphate. Residue Gly-84 coordinates anthranilate. Residue Ser-96 coordinates Mg(2+). Arg-170 is a binding site for anthranilate. 2 residues coordinate Mg(2+): Asp-229 and Glu-230.

The protein belongs to the anthranilate phosphoribosyltransferase family. Homodimer. It depends on Mg(2+) as a cofactor.

It catalyses the reaction N-(5-phospho-beta-D-ribosyl)anthranilate + diphosphate = 5-phospho-alpha-D-ribose 1-diphosphate + anthranilate. The protein operates within amino-acid biosynthesis; L-tryptophan biosynthesis; L-tryptophan from chorismate: step 2/5. Functionally, catalyzes the transfer of the phosphoribosyl group of 5-phosphorylribose-1-pyrophosphate (PRPP) to anthranilate to yield N-(5'-phosphoribosyl)-anthranilate (PRA). The sequence is that of Anthranilate phosphoribosyltransferase from Leptothrix cholodnii (strain ATCC 51168 / LMG 8142 / SP-6) (Leptothrix discophora (strain SP-6)).